Reading from the N-terminus, the 279-residue chain is Putative expansin-A26 (279 aa).

The first 27 residues, 1-27, serve as a signal peptide directing secretion; that stretch reads MKLLEKMIYVEFLMIIMAMWVVPMSYG. Residues 76–186 enclose the Expansin-like EG45 domain; sequence QGACGYGNLF…RRIPCSKTGG (111 aa). In terms of domain architecture, Expansin-like CBD spans 196–275; it reads YFLMVLIYNV…NWGFGQTFDG (80 aa).

The protein belongs to the expansin family. Expansin A subfamily.

Its subcellular location is the secreted. It is found in the cell wall. The protein resides in the membrane. Causes loosening and extension of plant cell walls by disrupting non-covalent bonding between cellulose microfibrils and matrix glucans. No enzymatic activity has been found. This Arabidopsis thaliana (Mouse-ear cress) protein is Putative expansin-A26 (EXPA26).